The primary structure comprises 453 residues: MKKLFGTDGVRGVANVYPMTTEMAMQLGRAAAYIFKSSSKRRHRIVIGKDTRLSGYMLENAMVAGICSMGVDVLLVGPLPTPGIANITSSMRADAGVVISASHNPFQDNGIKFFSADGFKLPDQIELKIEKLIESNKIDSLRPTASEVGKAFRIDDAAGRYIVFLKNTFPTEMDLSGMKIVLDCANGAAYRVAPAVFEELGAEVICLGVSPNGTNINADCGSLYPQVISEAVKKHRADIGIALDGDADRVIVCDEFGHEVDGDHIMAICATDMLRRKLLKKKTLVTTVMSNMGLDIAMRAAGGKIVKTAVGDRYVVEEMRKGGYNLGGEQSGHMIFLDSNTTGDGILSALQLLAVMRRTEKPLSELSEVMIALPQVLVNTRVREKKDITTIPEIAARIRDVEEKLGNEGRVLIRYSGTEPLLRVMLEGKDTYEITAWANEIIDLVRKHLGEKQ.

The active-site Phosphoserine intermediate is the Ser-102. The Mg(2+) site is built by Ser-102, Asp-244, Asp-246, and Asp-248. The residue at position 102 (Ser-102) is a Phosphoserine.

It belongs to the phosphohexose mutase family. The cofactor is Mg(2+). Post-translationally, activated by phosphorylation.

It catalyses the reaction alpha-D-glucosamine 1-phosphate = D-glucosamine 6-phosphate. Its function is as follows. Catalyzes the conversion of glucosamine-6-phosphate to glucosamine-1-phosphate. The polypeptide is Phosphoglucosamine mutase (Pelobacter propionicus (strain DSM 2379 / NBRC 103807 / OttBd1)).